Here is a 777-residue protein sequence, read N- to C-terminus: Androgen receptor (777 aa).

Residues 1-416 form a modulating region; the sequence is MEVHIGLGGV…IDYYFPPQKP (416 aa). 3 disordered regions span residues 53-95, 110-132, and 205-241; these read CVHP…QAPQ, GEQG…YPES, and RRAG…LSEP. 2 NR C4-type zinc fingers span residues 417-434 and 453-472; these read CLSC…ALTC and CASR…CPSC. The nuclear receptor DNA-binding region spans 417-489; that stretch reads CLSCEDEASG…AGMTLGARKL (73 aa). An NR LBD domain is found at 526-757; it reads SCQPIFLNVL…DFPEMMSEII (232 aa). The 17beta-hydroxy-5alpha-androstan-3-one site is built by Asn-563, Arg-610, and Thr-735.

The protein belongs to the nuclear hormone receptor family. NR3 subfamily. In terms of assembly, binds DNA as a homodimer. Interacts via the ligand-binding domain with LXXLL and FXXLF motifs from coactivator proteins. Interacts (via ligand-binding domain) with TRIM68. As to expression, detected in somatic Leydig and Sertoli cells in testis with high level expression. Also detected at lower expression levels in forebrain and heart.

The protein resides in the nucleus. It is found in the cytoplasm. Steroid hormone receptors are ligand-activated transcription factors that regulate eukaryotic gene expression and affect cellular proliferation and differentiation in target tissues. Transcription factor activity is modulated by bound coactivator and corepressor proteins. The sequence is that of Androgen receptor (ar) from Aquarana catesbeiana (American bullfrog).